Reading from the N-terminus, the 147-residue chain is uncharacterized protein (147 aa).

This is an uncharacterized protein from Mycolicibacterium smegmatis (Mycobacterium smegmatis).